An 882-amino-acid polypeptide reads, in one-letter code: Translation initiation factor IF-2 (882 aa).

Residues 50 to 299 (SFKSANTTKP…KERPLPETLV (250 aa)) form a disordered region. Composition is skewed to basic and acidic residues over residues 60-71 (STEKDSKNSSRK) and 84-96 (RRRD…DNRH). Residues 97–108 (GNNKRRNNKFKK) are compositionally biased toward basic residues. Composition is skewed to basic and acidic residues over residues 109 to 133 (QQND…DLLN), 169 to 183 (KKVE…EKLE), 232 to 242 (QKEETKPTRKK), and 250 to 263 (EVPD…EHSD). Residues 264–277 (KARRRRNKKNKRIN) show a composition bias toward basic residues. Residues 278 to 294 (QSKEIKKQPTQRKERPL) are compositionally biased toward basic and acidic residues. The 170-residue stretch at 383-552 (KRPPVVTIMG…LLQADVMELK (170 aa)) folds into the tr-type G domain. The interval 392 to 399 (GHVDHGKT) is G1. 392–399 (GHVDHGKT) provides a ligand contact to GTP. The G2 stretch occupies residues 417–421 (GITQK). Residues 438 to 441 (DTPG) are G3. Residues 438-442 (DTPGH) and 492-495 (NKID) each bind GTP. Residues 492–495 (NKID) are G4. A G5 region spans residues 528-530 (SAK).

This sequence belongs to the TRAFAC class translation factor GTPase superfamily. Classic translation factor GTPase family. IF-2 subfamily.

It localises to the cytoplasm. Its function is as follows. One of the essential components for the initiation of protein synthesis. Protects formylmethionyl-tRNA from spontaneous hydrolysis and promotes its binding to the 30S ribosomal subunits. Also involved in the hydrolysis of GTP during the formation of the 70S ribosomal complex. The sequence is that of Translation initiation factor IF-2 from Lactobacillus gasseri (strain ATCC 33323 / DSM 20243 / BCRC 14619 / CIP 102991 / JCM 1131 / KCTC 3163 / NCIMB 11718 / NCTC 13722 / AM63).